Consider the following 206-residue polypeptide: RNA pyrophosphohydrolase (206 aa).

One can recognise a Nudix hydrolase domain in the interval 6–149 (GYRPNVGIVL…KRGVYARALR (144 aa)). A Nudix box motif is present at residues 38–59 (GGMNTDETPVEAMYRELQEETG). The segment at 175–206 (MPGHTAGHDRPRKRPRSRGYWPKKAQGDVPPT) is disordered.

It belongs to the Nudix hydrolase family. RppH subfamily. It depends on a divalent metal cation as a cofactor.

Its function is as follows. Accelerates the degradation of transcripts by removing pyrophosphate from the 5'-end of triphosphorylated RNA, leading to a more labile monophosphorylated state that can stimulate subsequent ribonuclease cleavage. The protein is RNA pyrophosphohydrolase of Stenotrophomonas maltophilia (strain R551-3).